The following is a 387-amino-acid chain: MKKKCIAMLLAGGQGSRLRSLTTNIAKPAVPFGGKYRIIDFTLSNCTNSGIDTVGVLTQYQPLLLHSYIGIGSAWDLDRRNGGVTVLPPYSVSSGVKWYEGTANAVYQNINYIEQYNPDYVLVLSGDHIYKMDYQHMLDYHIAKQADVTISVIEVPWEEASRFGIMNTNEEMEIVEFAEKPAEPKSNLASMGIYIFNWPLLKQYLQIDNANPHSSHDFGKDVIPMLLREKKRPFAYPFEGYWKDVGTVKSLWEANMDLLDENNELDLFDRSWRIYSVNPNQPPQYISPEAEVSDSLVNEGCVVEGTVERSVLFQGVRIGKGAVVKESVIMPGAAVSEGAYVERAIVTPDSIIPPHSSVCPEDADDVVLVTAEWLKQSNEETARKDEA.

Alpha-D-glucose 1-phosphate contacts are provided by residues tyrosine 99, glycine 164, 179–180, and serine 190; that span reads EK.

It belongs to the bacterial/plant glucose-1-phosphate adenylyltransferase family. As to quaternary structure, homotetramer.

The catalysed reaction is alpha-D-glucose 1-phosphate + ATP + H(+) = ADP-alpha-D-glucose + diphosphate. The protein operates within glycan biosynthesis; glycogen biosynthesis. Involved in the biosynthesis of ADP-glucose, a building block required for the elongation reactions to produce glycogen. Catalyzes the reaction between ATP and alpha-D-glucose 1-phosphate (G1P) to produce pyrophosphate and ADP-Glc. The protein is Glucose-1-phosphate adenylyltransferase of Geobacillus stearothermophilus (Bacillus stearothermophilus).